The sequence spans 298 residues: Flavin-dependent thymidylate synthase (298 aa).

The 211-residue stretch at 41-251 (GFVRLVDYMG…PLTYAAFVEY (211 aa)) folds into the ThyX domain. Residues T87, 110-112 (RHR), and E118 each bind FAD. Residues 107 to 110 (QWVR), 118 to 122 (EYSAR), and R190 each bind dUMP. The short motif at 110 to 120 (RHRTANVNEYS) is the ThyX motif element. Residues 206–208 (DLH) and H212 each bind FAD. Residue R217 participates in dUMP binding. The Involved in ionization of N3 of dUMP, leading to its activation role is filled by R217.

The protein belongs to the thymidylate synthase ThyX family. Homotetramer. The cofactor is FAD.

The enzyme catalyses dUMP + (6R)-5,10-methylene-5,6,7,8-tetrahydrofolate + NADPH + H(+) = dTMP + (6S)-5,6,7,8-tetrahydrofolate + NADP(+). It participates in pyrimidine metabolism; dTTP biosynthesis. Its function is as follows. Catalyzes the reductive methylation of 2'-deoxyuridine-5'-monophosphate (dUMP) to 2'-deoxythymidine-5'-monophosphate (dTMP) while utilizing 5,10-methylenetetrahydrofolate (mTHF) as the methyl donor, and NADPH and FADH(2) as the reductant. The sequence is that of Flavin-dependent thymidylate synthase from Ehrlichia ruminantium (strain Welgevonden).